The chain runs to 166 residues: MLVIHRRTTPQATWSAELHLTYEARSKSRLRCFSAAGEDVGLFLERGQPPLHDGEFLEAEDGRIVKVCARPEALLHVTCRNAFELTRAAYHLGNRHVALQVGDGWLRLLDDYVLKAMLEQLGASTAPLEAPFQPEHGAYGGGHHHSRHGDEDFNYPPRLHQFGVRP.

The disordered stretch occupies residues 132 to 156 (FQPEHGAYGGGHHHSRHGDEDFNYP).

It belongs to the UreE family.

It is found in the cytoplasm. In terms of biological role, involved in urease metallocenter assembly. Binds nickel. Probably functions as a nickel donor during metallocenter assembly. The protein is Urease accessory protein UreE of Pseudomonas fluorescens (strain ATCC BAA-477 / NRRL B-23932 / Pf-5).